We begin with the raw amino-acid sequence, 145 residues long: uncharacterized protein (145 aa).

Residues valine 97 and asparagine 121 each coordinate substrate.

It belongs to the D-isomer specific 2-hydroxyacid dehydrogenase family. FDH subfamily.

This is an uncharacterized protein from Saccharomyces cerevisiae (strain ATCC 204508 / S288c) (Baker's yeast).